Reading from the N-terminus, the 772-residue chain is Angiomotin-like protein 2 (772 aa).

3 disordered regions span residues 41-158 (GGAG…HVRS), 170-239 (RNGA…SPHF), and 260-299 (QYQY…PSAQ). Composition is skewed to basic and acidic residues over residues 80-91 (QGGETHLAENRL), 100-112 (KGEE…EAKA), and 142-153 (RRQDEALRELRH). Positions 101-303 (GEELPTYEEA…GPPSAQATLG (203 aa)) are required for interaction with CDH5. Tyrosine 107 bears the Phosphotyrosine; by FGFR1 mark. The span at 178–191 (HMSSSHSFPQLARS) shows a compositional bias: polar residues. Positions 197-214 (PRGPPAEGPEPRGPPPQY) are enriched in pro residues. Positions 221–303 (QETAAVTDPR…GPPSAQATLG (83 aa)) are required for interaction with CDH1. Residues 305-578 (AHLAQMETVL…KYLEERAMRQ (274 aa)) are a coiled coil. Residues lysine 343 and lysine 404 each participate in a glycyl lysine isopeptide (Lys-Gly) (interchain with G-Cter in ubiquitin) cross-link. Disordered stretches follow at residues 596 to 615 (IRHS…LLPG) and 680 to 752 (GLVS…RTPS). Residues 686–699 (RQTDARPAGDRVPA) show a composition bias toward basic and acidic residues. The segment covering 718–733 (DGSTQTDGPADNTSAC) has biased composition (polar residues). Phosphoserine is present on residues serine 752 and serine 755. Residues 769–772 (EILI) carry the PDZ-binding motif.

It belongs to the angiomotin family. Part of a complex composed of AMOTL2, MAGI1 and CDH5, within the complex AMOTL2 acts as a scaffold protein for the interaction of MAGI1 with CDH5. The complex is required for coupling actin fibers to cell junctions in endothelial cells. Within the complex AMOTL2 (via its N-terminus) interacts with CDH5. Interacts (via N-terminus) with MAGI1. Interacts (via N-terminus) with ACTB; the interaction facilitates binding of cell junction complexes to actin fibers in endothelial cells. Interacts with CDH1; the interaction may facilitate binding of radial actin fibers to cell junction complexes. Interacts with SRC. Interacts with YAP1; the interaction is required for ubiquitination of AMOTL2 and localization of YAP1 to tight junctions. Interacts with WWP1; the interaction facilitates WWP1 interaction with the Crumbs complex and subsequent WWP1 translocation to the plasma membrane. WWP1 interaction with the Crumbs complex promotes WWP1 monoubiquitination of AMOTL2 which subsequently activates the Hippo signaling pathway. When ubiquitinated interacts with LATS2 (via UBA domain); the interaction promotes LATS2 phosphorylation of YAP1. Interacts (via PPXY motif) with WWTR1/TAZ (via WW domain); the interaction promotes WWTR1/TAZ localization to the cytoplasm and thereby inhibition of its transcriptional properties. Interacts with PHLDB2; interaction may facilitate PHLDB2 localization to the myotube podosome cortex that surrounds the core. In terms of processing, phosphorylation at Tyr-107 is necessary for efficient binding to SRC and synergistically functioning with SRC to activate the downstream MAPK pathway. Post-translationally, monoubiquitinated at Lys-343 and Lys-404 by Crumbs complex-bound WWP1. De-ubiquitinated at Lys-343 and Lys-404 by USP9X; the interaction may be promoted by cell contact inhibition. Deubiquitination of AMOTL2 negatively regulates Hippo signaling activation. In terms of tissue distribution, expressed in skeletal muscle at neuromuscular junctions (at protein level).

It localises to the recycling endosome. It is found in the cytoplasm. The protein resides in the cell projection. The protein localises to the podosome. Its subcellular location is the cell junction. In terms of biological role, regulates the translocation of phosphorylated SRC to peripheral cell-matrix adhesion sites. Required for proper architecture of actin filaments. Plays a role in coupling actin fibers to cell junctions in endothelial cells and is therefore required for correct endothelial cell morphology via facilitating transcellular transmission of mechanical force resulting in endothelial cell elongation. Required for the anchoring of radial actin fibers to CDH1 junction complexes at the cell membrane which facilitates organization of radial actin fiber structure and cellular response to contractile forces. This contributes to maintenance of cell area, size, shape, epithelial sheet organization and trophectoderm cell properties that facilitate blastocyst zona hatching. Inhibits the Wnt/beta-catenin signaling pathway, probably by recruiting CTNNB1 to recycling endosomes and hence preventing its translocation to the nucleus. Participates in angiogenesis. Activates the Hippo signaling pathway in response to cell contact inhibition via interaction with and ubiquitination by Crumbs complex-bound WWP1. Ubiquitinated AMOTL2 then interacts with LATS2 which in turn phosphorylates YAP1, excluding it from the nucleus and localizing it to the cytoplasm and tight junctions, therefore ultimately repressing YAP1-driven transcription of target genes. Acts to inhibit WWTR1/TAZ transcriptional coactivator activity via sequestering WWTR1/TAZ in the cytoplasm and at tight junctions. Regulates the size and protein composition of the podosome cortex and core at myofibril neuromuscular junctions. Selectively promotes FGF-induced MAPK activation through SRC. May play a role in the polarity, proliferation and migration of endothelial cells. The protein is Angiomotin-like protein 2 of Mus musculus (Mouse).